A 177-amino-acid chain; its full sequence is O-acetyl-ADP-ribose deacetylase (177 aa).

Residues 1 to 175 (MKSRIHVQHG…LYERLLTQQG (175 aa)) enclose the Macro domain. Substrate is bound by residues 11–12 (DI), N25, 33–35 (GVD), and 122–126 (STGAY). D35 (proton acceptor) is an active-site residue.

Belongs to the MacroD-type family. YmdB subfamily. As to quaternary structure, homodimer. Interacts with RNase III.

It carries out the reaction 3''-O-acetyl-ADP-D-ribose + H2O = ADP-D-ribose + acetate + H(+). It catalyses the reaction 2''-O-acetyl-ADP-D-ribose + H2O = ADP-D-ribose + acetate + H(+). Deacetylates O-acetyl-ADP ribose to yield ADP-ribose and free acetate. Down-regulates ribonuclease 3 (RNase III) activity. Acts by interacting directly with the region of the ribonuclease that is required for dimerization/activation. This is O-acetyl-ADP-ribose deacetylase from Citrobacter koseri (strain ATCC BAA-895 / CDC 4225-83 / SGSC4696).